The primary structure comprises 610 residues: UvrABC system protein C (610 aa).

Positions Ser16 to Val94 constitute a GIY-YIG domain. One can recognise a UVR domain in the interval Asp204–Val239.

This sequence belongs to the UvrC family. As to quaternary structure, interacts with UvrB in an incision complex.

It is found in the cytoplasm. Functionally, the UvrABC repair system catalyzes the recognition and processing of DNA lesions. UvrC both incises the 5' and 3' sides of the lesion. The N-terminal half is responsible for the 3' incision and the C-terminal half is responsible for the 5' incision. This is UvrABC system protein C from Salmonella paratyphi C (strain RKS4594).